Reading from the N-terminus, the 425-residue chain is Exodeoxyribonuclease 7 large subunit (425 aa).

Belongs to the XseA family. Heterooligomer composed of large and small subunits.

Its subcellular location is the cytoplasm. It carries out the reaction Exonucleolytic cleavage in either 5'- to 3'- or 3'- to 5'-direction to yield nucleoside 5'-phosphates.. Functionally, bidirectionally degrades single-stranded DNA into large acid-insoluble oligonucleotides, which are then degraded further into small acid-soluble oligonucleotides. This Nocardia farcinica (strain IFM 10152) protein is Exodeoxyribonuclease 7 large subunit.